Consider the following 235-residue polypeptide: 15,16-dihydrobiliverdin:ferredoxin oxidoreductase (235 aa).

This sequence belongs to the HY2 family.

The catalysed reaction is 15,16-dihydrobiliverdin + oxidized 2[4Fe-4S]-[ferredoxin] = biliverdin IXalpha + reduced 2[4Fe-4S]-[ferredoxin] + 2 H(+). Catalyzes the two-electron reduction of biliverdin IX-alpha at the C15 methine bridge. The protein is 15,16-dihydrobiliverdin:ferredoxin oxidoreductase of Synechococcus sp. (strain CC9605).